Here is a 169-residue protein sequence, read N- to C-terminus: Ribosome maturation factor RimM (169 aa).

One can recognise a PRC barrel domain in the interval 97–169 (EDEVYFKDLI…KIVVDWEYDY (73 aa)).

The protein belongs to the RimM family. As to quaternary structure, binds ribosomal protein uS19.

The protein resides in the cytoplasm. In terms of biological role, an accessory protein needed during the final step in the assembly of 30S ribosomal subunit, possibly for assembly of the head region. Essential for efficient processing of 16S rRNA. May be needed both before and after RbfA during the maturation of 16S rRNA. It has affinity for free ribosomal 30S subunits but not for 70S ribosomes. The chain is Ribosome maturation factor RimM from Francisella tularensis subsp. holarctica (strain FTNF002-00 / FTA).